The primary structure comprises 763 residues: Protein translocase subunit SecA 2 (763 aa).

ATP contacts are provided by residues Gln-83, 101–105, and Asp-490; that span reads GEGKT.

Belongs to the SecA family. Monomer and homodimer. Part of the essential Sec protein translocation apparatus which comprises SecA, SecYEG and auxiliary proteins SecDF. Other proteins may also be involved.

Its subcellular location is the cell membrane. It is found in the cytoplasm. The enzyme catalyses ATP + H2O + cellular proteinSide 1 = ADP + phosphate + cellular proteinSide 2.. Its function is as follows. Part of the Sec protein translocase complex. Interacts with the SecYEG preprotein conducting channel. Has a central role in coupling the hydrolysis of ATP to the transfer of proteins into and across the cell membrane, serving as an ATP-driven molecular motor driving the stepwise translocation of polypeptide chains across the membrane. This is Protein translocase subunit SecA 2 from Corynebacterium efficiens (strain DSM 44549 / YS-314 / AJ 12310 / JCM 11189 / NBRC 100395).